The sequence spans 436 residues: Serine--tRNA ligase (436 aa).

242 to 244 (TAE) is an L-serine binding site. 273-275 (RSE) serves as a coordination point for ATP. An L-serine-binding site is contributed by Glu296. Residue 360-363 (EISS) coordinates ATP. Residue Ser395 coordinates L-serine.

The protein belongs to the class-II aminoacyl-tRNA synthetase family. Type-1 seryl-tRNA synthetase subfamily. In terms of assembly, homodimer. The tRNA molecule binds across the dimer.

The protein resides in the cytoplasm. It catalyses the reaction tRNA(Ser) + L-serine + ATP = L-seryl-tRNA(Ser) + AMP + diphosphate + H(+). It carries out the reaction tRNA(Sec) + L-serine + ATP = L-seryl-tRNA(Sec) + AMP + diphosphate + H(+). It participates in aminoacyl-tRNA biosynthesis; selenocysteinyl-tRNA(Sec) biosynthesis; L-seryl-tRNA(Sec) from L-serine and tRNA(Sec): step 1/1. In terms of biological role, catalyzes the attachment of serine to tRNA(Ser). Is also able to aminoacylate tRNA(Sec) with serine, to form the misacylated tRNA L-seryl-tRNA(Sec), which will be further converted into selenocysteinyl-tRNA(Sec). This Polynucleobacter necessarius subsp. necessarius (strain STIR1) protein is Serine--tRNA ligase.